We begin with the raw amino-acid sequence, 96 residues long: U6 snRNA-associated Sm-like protein LSm8 (96 aa).

One can recognise a Sm domain in the interval 1-76 (MTSALENYIN…VAVIGEIDEE (76 aa)). Residue threonine 2 is modified to N-acetylthreonine.

Belongs to the snRNP Sm proteins family. In terms of assembly, component of the precatalytic spliceosome (spliceosome B complex). Component of the U4/U6-U5 tri-snRNP complex, a building block of the precatalytic spliceosome (spliceosome B complex). The U4/U6-U5 tri-snRNP complex is composed of the U4, U6 and U5 snRNAs and at least PRPF3, PRPF4, PRPF6, PRPF8, PRPF31, SNRNP200, TXNL4A, SNRNP40, SNRPB, SNRPD1, SNRPD2, SNRPD3, SNRPE, SNRPF, SNRPG, DDX23, CD2BP2, PPIH, SNU13, EFTUD2, SART1 and USP39, plus LSM2, LSM3, LSM4, LSM5, LSM6, LSM7 and LSM8. LSM2, LSM3, LSM4, LSM5, LSM6, LSM7 and LSM8 form a heptameric, ring-shaped subcomplex (the LSM2-8 complex) that is part of the U4/U6-U5 tri-snRNP complex and the precatalytic spliceosome.

The protein resides in the nucleus. In terms of biological role, plays a role in pre-mRNA splicing as component of the U4/U6-U5 tri-snRNP complex that is involved in spliceosome assembly, and as component of the precatalytic spliceosome (spliceosome B complex). The heptameric LSM2-8 complex binds specifically to the 3'-terminal U-tract of U6 snRNA. The sequence is that of U6 snRNA-associated Sm-like protein LSm8 (LSM8) from Bos taurus (Bovine).